The primary structure comprises 476 residues: Ribulose bisphosphate carboxylase large chain (476 aa).

Positions 1–2 (MS) are excised as a propeptide. An N-acetylproline modification is found at P3. K14 carries the N6,N6,N6-trimethyllysine modification. Substrate is bound by residues N123 and T173. The Proton acceptor role is filled by K175. K177 contributes to the substrate binding site. Residues K201, D203, and E204 each coordinate Mg(2+). At K201 the chain carries N6-carboxylysine. The active-site Proton acceptor is the H294. Positions 295, 327, and 379 each coordinate substrate.

This sequence belongs to the RuBisCO large chain family. Type I subfamily. In terms of assembly, heterohexadecamer of 8 large chains and 8 small chains; disulfide-linked. The disulfide link is formed within the large subunit homodimers. Mg(2+) serves as cofactor. The disulfide bond which can form in the large chain dimeric partners within the hexadecamer appears to be associated with oxidative stress and protein turnover.

The protein localises to the plastid. It localises to the chloroplast. The enzyme catalyses 2 (2R)-3-phosphoglycerate + 2 H(+) = D-ribulose 1,5-bisphosphate + CO2 + H2O. The catalysed reaction is D-ribulose 1,5-bisphosphate + O2 = 2-phosphoglycolate + (2R)-3-phosphoglycerate + 2 H(+). Its function is as follows. RuBisCO catalyzes two reactions: the carboxylation of D-ribulose 1,5-bisphosphate, the primary event in carbon dioxide fixation, as well as the oxidative fragmentation of the pentose substrate in the photorespiration process. Both reactions occur simultaneously and in competition at the same active site. This Phaseolus vulgaris (Kidney bean) protein is Ribulose bisphosphate carboxylase large chain.